A 67-amino-acid chain; its full sequence is Large ribosomal subunit protein uL29 (67 aa).

It belongs to the universal ribosomal protein uL29 family.

This chain is Large ribosomal subunit protein uL29, found in Methanosarcina acetivorans (strain ATCC 35395 / DSM 2834 / JCM 12185 / C2A).